Reading from the N-terminus, the 2197-residue chain is uncharacterized protein (2197 aa).

At serine 2 the chain carries N-acetylserine. An HEAT repeat occupies 2159–2195; it reads TIPFLAELLEDVELSVKSLAQDIIKQMEEMSGESLAE.

Belongs to the HEATR1/UTP10 family.

The protein localises to the nucleus. It localises to the nucleolus. In terms of biological role, involved in nucleolar processing of pre-18S ribosomal RNA. Involved in ribosome biosynthesis. This is an uncharacterized protein from Arabidopsis thaliana (Mouse-ear cress).